A 295-amino-acid polypeptide reads, in one-letter code: Mitochondrial dicarboxylate transporter (295 aa).

Solcar repeat units lie at residues K4 to H88, T96 to F188, and K198 to Y286. 6 helical membrane passes run Y8–T24, G63–Y82, M98–I122, G163–Y182, L204–I224, and W262–M280.

This sequence belongs to the mitochondrial carrier (TC 2.A.29) family. Homodimer.

The protein resides in the mitochondrion inner membrane. Its function is as follows. Mitochondrial dicarboxylic transporter catalyzing the exchange of dicarboxylic acids like malate and succinate for inorganic phosphate. Required for growth on ethanol and acetate. The protein is Mitochondrial dicarboxylate transporter (DIC1) of Candida glabrata (strain ATCC 2001 / BCRC 20586 / JCM 3761 / NBRC 0622 / NRRL Y-65 / CBS 138) (Yeast).